A 188-amino-acid chain; its full sequence is Phosphoheptose isomerase (188 aa).

The 156-residue stretch at 33 to 188 folds into the SIS domain; the sequence is VTASLRAGGK…CGLVEDALCS (156 aa). 48-50 is a substrate binding site; that stretch reads NGG. Zn(2+) contacts are provided by His-57 and Glu-61. Substrate contacts are provided by residues Glu-61, 90–91, 116–118, Ser-121, and Gln-168; these read ND and STS. Gln-168 and His-176 together coordinate Zn(2+).

Belongs to the SIS family. GmhA subfamily. Homotetramer. Zn(2+) is required as a cofactor.

Its subcellular location is the cytoplasm. It catalyses the reaction 2 D-sedoheptulose 7-phosphate = D-glycero-alpha-D-manno-heptose 7-phosphate + D-glycero-beta-D-manno-heptose 7-phosphate. It participates in carbohydrate biosynthesis; D-glycero-D-manno-heptose 7-phosphate biosynthesis; D-glycero-alpha-D-manno-heptose 7-phosphate and D-glycero-beta-D-manno-heptose 7-phosphate from sedoheptulose 7-phosphate: step 1/1. Catalyzes the isomerization of sedoheptulose 7-phosphate in D-glycero-D-manno-heptose 7-phosphate. The polypeptide is Phosphoheptose isomerase (Rhodospirillum rubrum (strain ATCC 11170 / ATH 1.1.1 / DSM 467 / LMG 4362 / NCIMB 8255 / S1)).